We begin with the raw amino-acid sequence, 213 residues long: Thymidylate kinase (213 aa).

10 to 17 provides a ligand contact to ATP; that stretch reads GLEGAGKT.

The protein belongs to the thymidylate kinase family.

It carries out the reaction dTMP + ATP = dTDP + ADP. Its function is as follows. Phosphorylation of dTMP to form dTDP in both de novo and salvage pathways of dTTP synthesis. The protein is Thymidylate kinase of Escherichia coli O1:K1 / APEC.